Reading from the N-terminus, the 68-residue chain is Beta-defensin 1 (68 aa).

The signal sequence occupies residues 1-21 (MRTSYLLLFTLCLLLSEMASG). The propeptide occupies 22-32 (DNFLTGLGHRS). 3 disulfides stabilise this stretch: cysteine 37-cysteine 66, cysteine 44-cysteine 59, and cysteine 49-cysteine 67.

The protein belongs to the beta-defensin family. As to quaternary structure, monomer. Homodimer.

The protein localises to the secreted. It localises to the membrane. Functionally, has bactericidal activity. May act as a ligand for C-C chemokine receptor CCR6. Positively regulates the sperm motility and bactericidal activity in a CCR6-dependent manner. Binds to CCR6 and triggers Ca2+ mobilization in the sperm which is important for its motility. In Hylobates moloch (Silvery gibbon), this protein is Beta-defensin 1 (DEFB1).